Reading from the N-terminus, the 411-residue chain is Peptide chain release factor subunit 1 (411 aa).

Belongs to the eukaryotic release factor 1 family. Heterodimer of two subunits, one of which binds GTP.

The protein localises to the cytoplasm. Directs the termination of nascent peptide synthesis (translation) in response to the termination codons UAA, UAG and UGA. This is Peptide chain release factor subunit 1 from Methanosphaera stadtmanae (strain ATCC 43021 / DSM 3091 / JCM 11832 / MCB-3).